A 460-amino-acid chain; its full sequence is Serine incorporator 5 (460 aa).

At 1 to 36 the chain is on the extracellular side; that stretch reads MSARCCAGQLACCCGSAGCALCCGCCPKFRQSRSTR. The chain crosses the membrane as a helical span at residues 37–57; that stretch reads FMYLFYFTLVIIPCCVMMSPS. Topologically, residues 58-89 are cytoplasmic; it reads VMKQMTEHIPFFEDFCKGIKAGDTCENLVGYS. A helical transmembrane segment spans residues 90-110; it reads AVYRVCFGMACFFFVFCVLTF. Over 111 to 124 the chain is Extracellular; the sequence is KVNNSKSCRASIHN. N113 carries an N-linked (GlcNAc...) asparagine glycan. Residues 125-145 traverse the membrane as a helical segment; that stretch reads GFWFFKLLLLGAMCSGAFFIP. The Cytoplasmic portion of the chain corresponds to 146–156; that stretch reads DQETFLNVWRY. Residues 157-177 traverse the membrane as a helical segment; that stretch reads VGAVGSFFFICIQLLLIVEFA. Residues 178–197 lie on the Extracellular side of the membrane; it reads HKWNKNWTAGTVRNKLWYAS. The N-linked (GlcNAc...) asparagine glycan is linked to N183. Residues 198 to 218 traverse the membrane as a helical segment; it reads LSLALIMYSIAVGGLALMAVF. The Cytoplasmic portion of the chain corresponds to 219–229; the sequence is YTQWDDCMDNK. The chain crosses the membrane as a helical span at residues 230 to 250; that stretch reads ILLGVHGGLCVLISLAAISPC. Topologically, residues 251–258 are extracellular; the sequence is VQNRQPHS. Residues 259 to 279 traverse the membrane as a helical segment; sequence GLLQPGLISCYVTYLTFSALT. The Cytoplasmic segment spans residues 280–309; sequence SKPEKVVKDEHGKNVTICVPDFGQDFRRDE. A helical membrane pass occupies residues 310-330; it reads SMVTWLGTLLLVVCISYSCLT. The Extracellular segment spans residues 331–390; the sequence is STTRSSSDALQRRYGAPELEVARCCFCFGPDGEDTEEQQNVKEGPRVIYDEKKGTVYSYS. A helical transmembrane segment spans residues 391-411; that stretch reads YFHFVLLLASLYVMMTLTSWF. Over 412-427 the chain is Cytoplasmic; the sequence is HYENATIETFFVGSWS. Residues 428–448 form a helical membrane-spanning segment; sequence IFWVKMASCWMCVLLYLWTLV. Over 449–460 the chain is Extracellular; the sequence is APLCCPSRQFSV.

Belongs to the TDE1 family. Brain. Expressed at high levels in the white matter and the oligodendroglial cells of the brain. Expressed at low levels in the liver.

Its subcellular location is the cell membrane. The catalysed reaction is a 1,2-diacyl-sn-glycero-3-phospho-L-serine(in) = a 1,2-diacyl-sn-glycero-3-phospho-L-serine(out). It carries out the reaction a 1,2-diacyl-sn-glycero-3-phosphocholine(in) = a 1,2-diacyl-sn-glycero-3-phosphocholine(out). The enzyme catalyses a 1,2-diacyl-sn-glycero-3-phosphoethanolamine(in) = a 1,2-diacyl-sn-glycero-3-phosphoethanolamine(out). Functionally, restriction factor required to restrict infectivity of gammaretroviruses: acts by inhibiting an early step of viral infection. Impairs the penetration of the viral particle into the cytoplasm. Non-ATP-dependent, non-specific lipid transporter for phosphatidylserine, phosphatidylcholine, and phosphatidylethanolamine. Functions as a scramblase that flips lipids in both directions across the membrane. Phospholipid scrambling results in gammaretroviral surface exposure of phosphatidylserine and loss of membrane asymmetry, which leads to loss of infectivity. Enhances the incorporation of serine into phosphatidylserine and sphingolipids. May play a role in providing serine molecules for the formation of myelin glycosphingolipids in oligodendrocytes. This Rattus norvegicus (Rat) protein is Serine incorporator 5 (Serinc5).